The sequence spans 368 residues: Nicotinate-nucleotide--dimethylbenzimidazole phosphoribosyltransferase (368 aa).

Glu314 acts as the Proton acceptor in catalysis. Residues 344–368 form a disordered region; sequence DRADGADNSADSGASAGTVASDPTV. A compositionally biased stretch (low complexity) spans 349 to 360; that stretch reads ADNSADSGASAG.

Belongs to the CobT family.

It catalyses the reaction 5,6-dimethylbenzimidazole + nicotinate beta-D-ribonucleotide = alpha-ribazole 5'-phosphate + nicotinate + H(+). It participates in nucleoside biosynthesis; alpha-ribazole biosynthesis; alpha-ribazole from 5,6-dimethylbenzimidazole: step 1/2. Catalyzes the synthesis of alpha-ribazole-5'-phosphate from nicotinate mononucleotide (NAMN) and 5,6-dimethylbenzimidazole (DMB). In Corynebacterium efficiens (strain DSM 44549 / YS-314 / AJ 12310 / JCM 11189 / NBRC 100395), this protein is Nicotinate-nucleotide--dimethylbenzimidazole phosphoribosyltransferase.